Here is a 389-residue protein sequence, read N- to C-terminus: S-adenosylmethionine synthase (389 aa).

H17 is a binding site for ATP. Mg(2+) is bound at residue D19. Residue E45 participates in K(+) binding. Residues E58 and Q101 each contribute to the L-methionine site. Residues 101-111 form a flexible loop region; that stretch reads QSPDISQGVTE. ATP contacts are provided by residues 168 to 170, 234 to 235, D243, 249 to 250, A266, and K270; these read DSK, RF, and RK. Residue D243 participates in L-methionine binding. Position 274 (K274) interacts with L-methionine.

This sequence belongs to the AdoMet synthase family. As to quaternary structure, homotetramer; dimer of dimers. Requires Mg(2+) as cofactor. It depends on K(+) as a cofactor.

The protein localises to the cytoplasm. It carries out the reaction L-methionine + ATP + H2O = S-adenosyl-L-methionine + phosphate + diphosphate. The protein operates within amino-acid biosynthesis; S-adenosyl-L-methionine biosynthesis; S-adenosyl-L-methionine from L-methionine: step 1/1. Its function is as follows. Catalyzes the formation of S-adenosylmethionine (AdoMet) from methionine and ATP. The overall synthetic reaction is composed of two sequential steps, AdoMet formation and the subsequent tripolyphosphate hydrolysis which occurs prior to release of AdoMet from the enzyme. The chain is S-adenosylmethionine synthase from Syntrophotalea carbinolica (strain DSM 2380 / NBRC 103641 / GraBd1) (Pelobacter carbinolicus).